Consider the following 358-residue polypeptide: 5,10-methenyltetrahydromethanopterin hydrogenase (358 aa).

It belongs to the HMD family. In terms of assembly, homotetramer.

The catalysed reaction is 5,10-methenyl-5,6,7,8-tetrahydromethanopterin + H2 = 5,10-methylenetetrahydromethanopterin + H(+). It participates in one-carbon metabolism; methanogenesis from CO(2); 5,10-methylene-5,6,7,8-tetrahydromethanopterin from 5,10-methenyl-5,6,7,8-tetrahydromethanopterin (hydrogen route): step 1/1. With respect to regulation, activity requires salt; 100 mM potassium phosphate, potassium chloride, and sodium chloride are equally effective. Functionally, catalyzes the reversible reduction of methenyl-H(4)MPT(+) to methylene-H(4)MPT. The protein is 5,10-methenyltetrahydromethanopterin hydrogenase of Methanopyrus kandleri (strain AV19 / DSM 6324 / JCM 9639 / NBRC 100938).